The primary structure comprises 338 residues: DNA-directed RNA polymerase subunit alpha (338 aa).

Residues methionine 1 to glutamate 234 form an alpha N-terminal domain (alpha-NTD) region. The tract at residues phenylalanine 250–phenylalanine 338 is alpha C-terminal domain (alpha-CTD).

This sequence belongs to the RNA polymerase alpha chain family. As to quaternary structure, homodimer. The RNAP catalytic core consists of 2 alpha, 1 beta, 1 beta' and 1 omega subunit. When a sigma factor is associated with the core the holoenzyme is formed, which can initiate transcription.

It catalyses the reaction RNA(n) + a ribonucleoside 5'-triphosphate = RNA(n+1) + diphosphate. Functionally, DNA-dependent RNA polymerase catalyzes the transcription of DNA into RNA using the four ribonucleoside triphosphates as substrates. This chain is DNA-directed RNA polymerase subunit alpha, found in Cereibacter sphaeroides (strain ATCC 17025 / ATH 2.4.3) (Rhodobacter sphaeroides).